The primary structure comprises 308 residues: Transmembrane and ubiquitin-like domain-containing protein 1 (308 aa).

A helical transmembrane segment spans residues 11–31 (VTVLFALVLFFMVLMLAWVST). A disordered region spans residues 39-162 (THWIRPEPAQ…GLGDGTTAQS (124 aa)). Over residues 63–93 (PSQTLTNADPNSETVDSSDSTQSSREFQNAG) the composition is skewed to polar residues. The span at 103–115 (SSSGSTVSTGGSV) shows a compositional bias: low complexity. Polar residues predominate over residues 132-149 (PNFTVSSRDPQAGASSSL). Positions 169–242 (IHLRLKFLND…LHCHISQHAS (74 aa)) constitute a Ubiquitin-like domain. The next 2 helical transmembrane spans lie at 253–273 (VPLN…MLLW) and 283–303 (FTGT…AIAF).

Its subcellular location is the membrane. It localises to the cytoplasm. The protein localises to the nucleus. Its function is as follows. May contribute to the regulation of translation during cell-cycle progression. May contribute to the regulation of cell proliferation. The membrane form is involved in sterol-regulated ubiquitination and degradation of HMG-CoA reductase HMGCR. May be involved in centrosome assembly. This is Transmembrane and ubiquitin-like domain-containing protein 1 (tmub1) from Xenopus laevis (African clawed frog).